Here is a 313-residue protein sequence, read N- to C-terminus: MEAQIHILEQEAYSAVLRAFQAQADEFSWDKATVMTNLRKELRISDDENRQLLNNVHNDDLIKRIRDSRPRGGNQVVRHQSLDVHPSPTFSASRKKQKTFQSYPSIGSTRSKSFNNRVVSANEPAEALIGRKVWTKWPEDNSFYEAVVTQYNANEGRHALVYDINTVNETWEWVDLNEIPTKDIRWDGEEDGVTLNVGHGGGTTRGNRRTLSHGGRGRGPRTQPRREHLATENGGGRKFFGEIELFNTDSLVKEVERVFDSNLPDPHELDKAKKLLKEHEQALIAAIARLTDASDYESDGEEPYSHELPMLLG.

An ENT domain is found at 1 to 88 (MEAQIHILEQ…HQSLDVHPSP (88 aa)). The stretch at 35–58 (MTNLRKELRISDDENRQLLNNVHN) forms a coiled coil. Disordered stretches follow at residues 84–106 (VHPS…YPSI) and 195–229 (LNVG…REHL). The span at 206-219 (GNRRTLSHGGRGRG) shows a compositional bias: basic residues. Residues 267 to 293 (HELDKAKKLLKEHEQALIAAIARLTDA) are a coiled coil. The residue at position 294 (S294) is a Phosphoserine. A disordered region spans residues 294-313 (SDYESDGEEPYSHELPMLLG).

In terms of assembly, interacts with EDM2 in nucleus.

Its subcellular location is the nucleus. Its function is as follows. Probably involved in the regulation of chromatin states. Contributes to RPP7-mediated and basal immunity, especially against Hyaloperonospora arabidopsidis isolate Hiks1. Regulates negatively EDM2-dependent floral transition. This is Protein EMSY-LIKE 2 from Arabidopsis thaliana (Mouse-ear cress).